A 426-amino-acid chain; its full sequence is Histidine--tRNA ligase (426 aa).

Belongs to the class-II aminoacyl-tRNA synthetase family. In terms of assembly, homodimer.

Its subcellular location is the cytoplasm. It catalyses the reaction tRNA(His) + L-histidine + ATP = L-histidyl-tRNA(His) + AMP + diphosphate + H(+). The polypeptide is Histidine--tRNA ligase (Legionella pneumophila (strain Paris)).